The following is a 76-amino-acid chain: ATP synthase subunit 9, mitochondrial (76 aa).

Met-1 carries the N-formylmethionine modification. A run of 2 helical transmembrane segments spans residues Ile-14–Ile-34 and Ile-52–Leu-72.

F-type ATP synthases have 2 components, the catalytic core F(1) and the membrane-embedded component F(0), linked together by a central stalk and a peripheral stalk. The central stalk, also called rotor shaft, is often seen as part of F(1). The peripheral stalk is seen as part of F(0). F(0) contains the membrane channel next to the rotor. F-type ATP synthases form dimers but each monomer functions independently in ATP generation. The dimer consists of 18 different polypeptides: ATP1 (subunit alpha, part of F(1), 3 molecules per monomer), ATP2 (subunit beta, part of F(1), 3 molecules per monomer), ATP3 (subunit gamma, part of the central stalk), ATP4 (subunit b, part of the peripheral stalk), ATP5/OSCP (subunit 5/OSCP, part of the peripheral stalk), ATP6 (subunit a, part of the peripheral stalk), ATP7 (subunit d, part of the peripheral stalk), ATP8 (subunit 8, part of the peripheral stalk), OLI1 (subunit c, part of the rotor, 10 molecules per monomer), ATP14 (subunit h, part of the peripheral stalk), ATP15 (subunit epsilon, part of the central stalk), ATP16 (subunit delta, part of the central stalk), ATP17 (subunit f, part of the peripheral stalk), ATP18 (subunit i/j, part of the peripheral stalk). Dimer-specific subunits are ATP19 (subunit k, at interface between monomers), ATP20 (subunit g, at interface between monomers), TIM11 (subunit e, at interface between monomers). Also contains subunit L.

It is found in the mitochondrion inner membrane. In terms of biological role, mitochondrial membrane ATP synthase (F(1)F(0) ATP synthase or Complex V) produces ATP from ADP in the presence of a proton gradient across the membrane which is generated by electron transport complexes of the respiratory chain. F-type ATP synthases consist of two structural domains, F(1) - containing the extramembraneous catalytic core, and F(0) - containing the membrane proton channel, linked together by a central stalk and a peripheral stalk. During catalysis, ATP synthesis in the catalytic domain of F(1) is coupled via a rotary mechanism of the central stalk subunits to proton translocation. Part of the complex F(0) domain. A homomeric c-ring of 10 OLI1/ATP9 subunits is part of the complex rotary element. This Pichia angusta (Yeast) protein is ATP synthase subunit 9, mitochondrial.